The following is a 1224-amino-acid chain: Cytosolic carboxypeptidase 1 (1224 aa).

The tract at residues 361 to 398 (PPDVDDVVDESDDNDDAETESEIETEDDKDQNFKNDDI) is disordered. Acidic residues predominate over residues 363–389 (DVDDVVDESDDNDDAETESEIETEDDK). In terms of domain architecture, Peptidase M14 spans 846 to 1136 (YPYTYSTLKM…KFCVGLLRLK (291 aa)). Zn(2+)-binding residues include His918, Glu921, and His1015. Glu1100 functions as the Proton donor/acceptor in the catalytic mechanism. Residues 1186–1197 (SAESNDDQDAEL) show a composition bias toward acidic residues. The interval 1186 to 1224 (SAESNDDQDAELADNVGDYEANNQEDGLSDSDSTRILLS) is disordered. A compositionally biased stretch (polar residues) spans 1206–1224 (ANNQEDGLSDSDSTRILLS).

This sequence belongs to the peptidase M14 family. Zn(2+) is required as a cofactor.

The protein resides in the cytoplasm. It is found in the cytosol. Its subcellular location is the nucleus. It localises to the mitochondrion. The enzyme catalyses (L-glutamyl)(n+1)-gamma-L-glutamyl-L-glutamyl-[protein] + H2O = (L-glutamyl)(n)-gamma-L-glutamyl-L-glutamyl-[protein] + L-glutamate. The catalysed reaction is C-terminal L-alpha-aminoacyl-L-glutamyl-L-glutamyl-[tubulin] + H2O = C-terminal L-alpha-aminoacyl-L-glutamyl-[tubulin] + L-glutamate. Its function is as follows. Metallocarboxypeptidase that mediates protein deglutamylation of tubulin and non-tubulin target proteins. Catalyzes the removal of polyglutamate side chains present on the gamma-carboxyl group of glutamate residues within the C-terminal tail of alpha- and beta-tubulin. Specifically cleaves tubulin long-side-chains, while it is not able to remove the branching point glutamate. Also catalyzes the removal of polyglutamate residues from the carboxy-terminus of alpha-tubulin as well as non-tubulin proteins. This Gallus gallus (Chicken) protein is Cytosolic carboxypeptidase 1 (AGTPBP1).